The sequence spans 396 residues: Probable sugar efflux transporter (396 aa).

12 helical membrane-spanning segments follow: residues Val15–Leu35, Val50–Leu70, Leu81–Phe101, Val103–Ala123, Ala136–Leu156, Phe170–Leu190, Pro209–Tyr229, Phe246–Gly266, Ala275–Ala295, Ile299–Met319, Val333–Gly353, and Met364–Phe384.

The protein belongs to the major facilitator superfamily. SotB (TC 2.A.1.2) family.

The protein resides in the cell inner membrane. In terms of biological role, involved in the efflux of sugars. The physiological role may be the reduction of the intracellular concentration of toxic sugars or sugar metabolites. The sequence is that of Probable sugar efflux transporter from Escherichia coli O6:K15:H31 (strain 536 / UPEC).